Consider the following 480-residue polypeptide: Vacuolar protein sorting-associated protein 9A (480 aa).

The VPS9 domain occupies 111 to 255 (VKSDEELFEK…IWNIDGESLS (145 aa)). The GTP site is built by Asn189 and Asp194. Polar residues predominate over residues 276–288 (SASSENQDNQNNL). Disordered stretches follow at residues 276-338 (SASS…VQSI) and 418-480 (ESEE…PEHA). Residues 289–305 (DVREQKSQTLKASRDSD) are compositionally biased toward basic and acidic residues. Composition is skewed to polar residues over residues 327–338 (ASSNPVERVQSI), 427–437 (NAVNFSEGSSK), and 451–461 (VDNTGTQQTAV).

As to quaternary structure, interacts with RAB5A. Interacts with GPA3 (via C-terminus).

Its subcellular location is the cytoplasm. The protein resides in the golgi apparatus. The protein localises to the trans-Golgi network. It is found in the prevacuolar compartment. Functionally, functions as a guanine nucleotide exchange factor (GEF) for Rab small GTPases. Activates specifically RAB5A protein. Functions cooperatively with RAB5A to regulate post-Golgi dense vesicle-mediated transport of storage proteins to the type II protein bodies (PBII) protein storage vacuoles in developing endosperm. In Oryza sativa subsp. japonica (Rice), this protein is Vacuolar protein sorting-associated protein 9A.